The following is a 415-amino-acid chain: ORC1-type DNA replication protein 2 (415 aa).

Residues 69–73 (TGKSV), tyrosine 215, and arginine 227 each bind ATP.

It belongs to the CDC6/cdc18 family.

In terms of biological role, involved in regulation of DNA replication. In Sulfolobus acidocaldarius (strain ATCC 33909 / DSM 639 / JCM 8929 / NBRC 15157 / NCIMB 11770), this protein is ORC1-type DNA replication protein 2 (cdc6-2).